The following is a 219-amino-acid chain: tRNA (guanine-N(7)-)-methyltransferase (219 aa).

Positions 44, 69, 102, and 125 each coordinate S-adenosyl-L-methionine. Substrate is bound by residues Lys129 and Asp161.

This sequence belongs to the class I-like SAM-binding methyltransferase superfamily. TrmB family.

It catalyses the reaction guanosine(46) in tRNA + S-adenosyl-L-methionine = N(7)-methylguanosine(46) in tRNA + S-adenosyl-L-homocysteine. It functions in the pathway tRNA modification; N(7)-methylguanine-tRNA biosynthesis. Its function is as follows. Catalyzes the formation of N(7)-methylguanine at position 46 (m7G46) in tRNA. The chain is tRNA (guanine-N(7)-)-methyltransferase from Clostridium perfringens (strain SM101 / Type A).